We begin with the raw amino-acid sequence, 197 residues long: MEAFRTHTGIGVPLRRSNVDTDQIIPAVYLKRVTRTGFEDGLFAAWRNDPSFVLNLAPFDKGSVLVAGPDFGTGSSREHAVWALMDFGFRVVISSRFADIFRGNAGKAGLLAAEVSQDDVELLWKLIEQHPGTEITVNLQDRTITAGTMMVLFNIDDYTAWRLLEGLDDIGLTLRKLDEIEDYERHRPEWKPHTLPA.

It belongs to the LeuD family. LeuD type 1 subfamily. As to quaternary structure, heterodimer of LeuC and LeuD.

It carries out the reaction (2R,3S)-3-isopropylmalate = (2S)-2-isopropylmalate. It participates in amino-acid biosynthesis; L-leucine biosynthesis; L-leucine from 3-methyl-2-oxobutanoate: step 2/4. Its function is as follows. Catalyzes the isomerization between 2-isopropylmalate and 3-isopropylmalate, via the formation of 2-isopropylmaleate. The polypeptide is 3-isopropylmalate dehydratase small subunit (Mycolicibacterium vanbaalenii (strain DSM 7251 / JCM 13017 / BCRC 16820 / KCTC 9966 / NRRL B-24157 / PYR-1) (Mycobacterium vanbaalenii)).